The sequence spans 316 residues: Methionyl-tRNA formyltransferase (316 aa).

112-115 (SLLP) serves as a coordination point for (6S)-5,6,7,8-tetrahydrofolate.

The protein belongs to the Fmt family.

The catalysed reaction is L-methionyl-tRNA(fMet) + (6R)-10-formyltetrahydrofolate = N-formyl-L-methionyl-tRNA(fMet) + (6S)-5,6,7,8-tetrahydrofolate + H(+). Functionally, attaches a formyl group to the free amino group of methionyl-tRNA(fMet). The formyl group appears to play a dual role in the initiator identity of N-formylmethionyl-tRNA by promoting its recognition by IF2 and preventing the misappropriation of this tRNA by the elongation apparatus. The protein is Methionyl-tRNA formyltransferase of Trichlorobacter lovleyi (strain ATCC BAA-1151 / DSM 17278 / SZ) (Geobacter lovleyi).